A 73-amino-acid polypeptide reads, in one-letter code: Translation initiation factor IF-1 (73 aa).

In terms of domain architecture, S1-like spans 1–72 (MAKEEAIEKD…SKGRIVYRYK (72 aa)).

It belongs to the IF-1 family. Component of the 30S ribosomal translation pre-initiation complex which assembles on the 30S ribosome in the order IF-2 and IF-3, IF-1 and N-formylmethionyl-tRNA(fMet); mRNA recruitment can occur at any time during PIC assembly.

The protein localises to the cytoplasm. One of the essential components for the initiation of protein synthesis. Stabilizes the binding of IF-2 and IF-3 on the 30S subunit to which N-formylmethionyl-tRNA(fMet) subsequently binds. Helps modulate mRNA selection, yielding the 30S pre-initiation complex (PIC). Upon addition of the 50S ribosomal subunit IF-1, IF-2 and IF-3 are released leaving the mature 70S translation initiation complex. The polypeptide is Translation initiation factor IF-1 (Salinibacter ruber (strain DSM 13855 / M31)).